Reading from the N-terminus, the 235-residue chain is Large ribosomal subunit protein uL3 (235 aa).

Positions 150–189 (AGGPASHGSGHHRHAGSTGMRSTPGRGLPGGKKAGQMGNE) are disordered.

It belongs to the universal ribosomal protein uL3 family. As to quaternary structure, part of the 50S ribosomal subunit. Forms a cluster with proteins L14 and L19.

One of the primary rRNA binding proteins, it binds directly near the 3'-end of the 23S rRNA, where it nucleates assembly of the 50S subunit. This is Large ribosomal subunit protein uL3 from Protochlamydia amoebophila (strain UWE25).